A 394-amino-acid polypeptide reads, in one-letter code: Large ribosomal subunit protein bL27m (394 aa).

A mitochondrion-targeting transit peptide spans 1-34 (MSFIKQVGKLIRPNDYSSSIFQTSFLNNVIQVRT). 2 disordered regions span residues 36-57 (TKRAAGSKTNKNDSAGRRLGPK) and 145-181 (AEAEKEENHMSRKEFLQQPELEKTRQEQQNQEEQRAS). Basic and acidic residues predominate over residues 145-170 (AEAEKEENHMSRKEFLQQPELEKTRQ).

Belongs to the bacterial ribosomal protein bL27 family.

It is found in the mitochondrion. Its function is as follows. Component of the large subunit of mitochondrial ribosome. This is Large ribosomal subunit protein bL27m (MRPL2) from Debaryomyces hansenii (strain ATCC 36239 / CBS 767 / BCRC 21394 / JCM 1990 / NBRC 0083 / IGC 2968) (Yeast).